Consider the following 304-residue polypeptide: Acetylglutamate kinase (304 aa).

Residues 69–70, Arg-91, and Asn-202 contribute to the substrate site; that span reads GG.

This sequence belongs to the acetylglutamate kinase family. ArgB subfamily.

It localises to the cytoplasm. The enzyme catalyses N-acetyl-L-glutamate + ATP = N-acetyl-L-glutamyl 5-phosphate + ADP. It functions in the pathway amino-acid biosynthesis; L-arginine biosynthesis; N(2)-acetyl-L-ornithine from L-glutamate: step 2/4. In terms of biological role, catalyzes the ATP-dependent phosphorylation of N-acetyl-L-glutamate. The chain is Acetylglutamate kinase from Caulobacter vibrioides (strain ATCC 19089 / CIP 103742 / CB 15) (Caulobacter crescentus).